The following is a 238-amino-acid chain: MNRNINFNTEMSIFEHLEELRQRIFIAALIFIVITAICFTYMKNISYILQQPAIGIKFLQLAPGEYLFTSIKVALYSGFLLSSPFIIYQITLFILPGLTKKESNFIVPILFISIILFFSGIVFAYIILVPAALKFLINYGNEIVEPIWSFEQYFNFILLLLFSTGIAFQIPIIQVILGILKIFSSSEMYAYWKYIVLGATVIAAIITPSTDPITQIIMSIAILALYSSGIIILKILNK.

Transmembrane regions (helical) follow at residues 24–44 (IFIA…YMKN), 78–98 (GFLL…LPGL), 109–129 (ILFI…IILV), 156–176 (FILL…IQVI), 188–208 (MYAY…IITP), and 216–236 (IIMS…LKIL).

This sequence belongs to the TatC family.

It is found in the plastid. The protein localises to the chloroplast membrane. This is an uncharacterized protein from Gracilaria tenuistipitata var. liui (Red alga).